Reading from the N-terminus, the 162-residue chain is Phosphopantetheine adenylyltransferase (162 aa).

Ser-11 contacts substrate. Residues 11–12 and His-19 contribute to the ATP site; that span reads SF. Residues Lys-43, Val-76, and Arg-90 each coordinate substrate. ATP contacts are provided by residues 91–93, Glu-101, and 126–132; these read GLR and HLYISSS.

Belongs to the bacterial CoaD family. Homohexamer. Mg(2+) serves as cofactor.

The protein resides in the cytoplasm. The enzyme catalyses (R)-4'-phosphopantetheine + ATP + H(+) = 3'-dephospho-CoA + diphosphate. It functions in the pathway cofactor biosynthesis; coenzyme A biosynthesis; CoA from (R)-pantothenate: step 4/5. In terms of biological role, reversibly transfers an adenylyl group from ATP to 4'-phosphopantetheine, yielding dephospho-CoA (dPCoA) and pyrophosphate. The sequence is that of Phosphopantetheine adenylyltransferase from Streptococcus pneumoniae (strain Taiwan19F-14).